The primary structure comprises 382 residues: Adenosine 3'-phospho 5'-phosphosulfate transporter 2 (382 aa).

The segment covering 1–10 (MSVSNRNGNG) has biased composition (polar residues). The interval 1 to 33 (MSVSNRNGNGSEVIYVGDRSTNRPPRNAPSPDE) is disordered. Helical transmembrane passes span 56-76 (LCCAGVFVLYLLYGYMQELIF), 83-103 (PYGWFLTLVQFAYYTVFGYVE), 121-141 (VLLAFLTLGTMGLSNSSLGYL), 144-164 (PTQVIFKCCKLVPVLIGSILI), 170-190 (GPLDFLAAIAMCLGLTLFTLA), 197-217 (NFNPFGVLLISLALLCDAAIG), 234-254 (VVIYSYGIGFVYLSVIMLLTG), 271-291 (FGYAFLFSLSGYLGIQIVLTL), 299-319 (LAATVTTARKAVTIALSFVFF), and 323-343 (FTINYLWSGLIVVLGIYLNVY).

This sequence belongs to the nucleotide-sugar transporter family. SLC35B subfamily.

It localises to the golgi apparatus membrane. Its function is as follows. Mediates the transport of adenosine 3'-phospho 5'-phosphosulfate (PAPS), from cytosol into Golgi. PAPS is a universal sulfuryl donor for sulfation events that take place in the Golgi. Essential for viability. Involved in glycosaminoglycan synthesis and the subsequent signaling. May be involved in hh and dpp signaling by controlling the sulfation of heparan sulfate (HS). In Aedes aegypti (Yellowfever mosquito), this protein is Adenosine 3'-phospho 5'-phosphosulfate transporter 2.